The chain runs to 186 residues: Large ribosomal subunit protein uL5c (186 aa).

This sequence belongs to the universal ribosomal protein uL5 family. As to quaternary structure, part of the 50S ribosomal subunit; contacts the 5S rRNA.

Its subcellular location is the plastid. The protein localises to the chloroplast. Binds 5S rRNA, forms part of the central protuberance of the 50S subunit. This Chaetosphaeridium globosum (Charophycean green alga) protein is Large ribosomal subunit protein uL5c (rpl5).